The primary structure comprises 239 residues: Lactate utilization protein A (239 aa).

The protein belongs to the LutA/YkgE family.

Functionally, is involved in L-lactate degradation and allows cells to grow with lactate as the sole carbon source. This chain is Lactate utilization protein A, found in Bacillus cytotoxicus (strain DSM 22905 / CIP 110041 / 391-98 / NVH 391-98).